We begin with the raw amino-acid sequence, 1307 residues long: CRISPR-associated endonuclease Cas12a (1307 aa).

Residues 1 to 35 form a WED-I (OBD-I) region; it reads MTQFEGFTNLYQVSKTLRFELIPQGKTLKHIQEQG. Positions 36–320 are REC1 (helical-I); it reads FIEEDKARND…SDRNTLSFIL (285 aa). 47–51 contributes to the crRNA binding site; that stretch reads YKELK. The stretch at 74–106 forms a coiled coil; the sequence is ENLSAAIDSYRKEKTEETRNALIEEQATYRNAI. CrRNA-binding positions include 175–176 and 307–310; these read NR and KQIL. The tract at residues 321 to 526 is WED-II (helical-II); that stretch reads EEFKSDEEVI…ARNYATKKPY (206 aa). A WED-II (OBD-I) region spans residues 527–598; sequence SVEKFKLNFQ…GFDKMYYDYF (72 aa). Positions 599-607 form a DNA-binding region, PAM-binding on target DNA; sequence PDAAKMIPK. The PI (LHD) stretch occupies residues 599 to 718; it reads PDAAKMIPKC…EYYAELNPLL (120 aa). Positions 719 to 884 are WED-III (OBD-III); the sequence is YHISFQRIAE…ITLNYQAANS (166 aa). 752–761 contributes to the crRNA binding site; that stretch reads KGHHGKPNLH. Residues 780–783 constitute a DNA-binding region (target DNA); that stretch reads KLNG. H800 (for pre-crRNA processing) is an active-site residue. Residue 806–808 coordinates crRNA; sequence MLN. Residues K809 and K860 each act as for pre-crRNA processing in the active site. Residues 885–940 form a ruvC-I region; it reads PSKFNQRVNAYLKEHPETPIIGIDRGERNLIYITVIDSTGKILEQRSLNTIQQFDY. The For DNase activity of RuvC domain role is filled by D908. The interval 941–957 is bridge helix; it reads QKKLDNREKERVAARQA. The segment at residues 951–968 is a DNA-binding region (target DNA); sequence RVAARQAWSVVGTIKDLK. The segment at 958-1066 is ruvC-II; sequence WSVVGTIKDL…TQSGFLFYVP (109 aa). E993 serves as the catalytic For DNase activity of RuvC domain. Positions 1051-1053 form a DNA-binding region, target DNA; it reads SFA. Positions 1067–1262 are nuclease domain; the sequence is APYTSKIDPL…FQNPEWPMDA (196 aa). Catalysis depends on R1226, which acts as the For DNase activity of nuclease domain. The For DNase activity of RuvC domain role is filled by D1263. The tract at residues 1263 to 1307 is ruvC-III; sequence DANGAYHIALKGQLLLNHLKESKDLKLQNGISNQDWLAYIQELRN.

Belongs to the CRISPR-associated endonuclease Cas12a family. Monomer. Mg(2+) is required as a cofactor.

It carries out the reaction Endonucleolytic cleavage to 5'-phosphodinucleotide and 5'-phosphooligonucleotide end-products.. The catalysed reaction is RNA = a 5'-hydroxy-ribonucleotide + n nucleoside-2',3'-cyclophosphates.. Its function is as follows. CRISPR (clustered regularly interspaced short palindromic repeat), is an adaptive immune system that provides protection against mobile genetic elements (viruses, transposable elements and conjugative plasmids). CRISPR clusters contain sequences complementary to antecedent mobile elements and target invading nucleic acids. CRISPR clusters are transcribed and processed into CRISPR RNA (crRNA). Recognizes a short motif in the CRISPR repeat sequences (the 5' PAM or protospacer adjacent motif, TTTN in this organism) to help distinguish self versus nonself, as targets within the bacterial CRISPR locus do not have PAMs. Has dsDNA endonuclease activity, results in staggered 4-base 5' overhangs 19 and 22 bases downstream of the PAM on the non-targeted and targeted strand respectively. Non-target strand cleavage by the RuvC domain is probably a prerequisite of target strand cleavage by the Nuc domain. Protects E.coli against plasmids and bacteriophage M13mp18, phage T4 with hydroxymethyl or unmodified (but not glycosylated) cytosines and to a lesser extent against lambda and VpaE1 phage. In this CRISPR system correct processing of pre-crRNA requires only this protein and the CRISPR locus. The polypeptide is CRISPR-associated endonuclease Cas12a (Acidaminococcus sp. (strain BV3L6)).